Here is a 217-residue protein sequence, read N- to C-terminus: Ribonuclease HII (217 aa).

The RNase H type-2 domain maps to 27 to 216; sequence SQVAGVDEAG…VKESIQEGVC (190 aa). Positions 33, 34, and 126 each coordinate a divalent metal cation.

Belongs to the RNase HII family. Requires Mn(2+) as cofactor. It depends on Mg(2+) as a cofactor.

It is found in the cytoplasm. The catalysed reaction is Endonucleolytic cleavage to 5'-phosphomonoester.. In terms of biological role, endonuclease that specifically degrades the RNA of RNA-DNA hybrids. The sequence is that of Ribonuclease HII from Chlamydia trachomatis serovar L2 (strain ATCC VR-902B / DSM 19102 / 434/Bu).